The primary structure comprises 297 residues: tRNA pseudouridine synthase B (297 aa).

Asp-44 functions as the Nucleophile in the catalytic mechanism.

Belongs to the pseudouridine synthase TruB family. Type 1 subfamily.

The catalysed reaction is uridine(55) in tRNA = pseudouridine(55) in tRNA. Responsible for synthesis of pseudouridine from uracil-55 in the psi GC loop of transfer RNAs. In Corynebacterium glutamicum (strain R), this protein is tRNA pseudouridine synthase B.